The primary structure comprises 311 residues: Putative S-adenosyl-L-methionine-dependent methyltransferase MUL_4761 (311 aa).

S-adenosyl-L-methionine is bound by residues D132 and 161–162; that span reads DL.

It belongs to the UPF0677 family.

Exhibits S-adenosyl-L-methionine-dependent methyltransferase activity. The polypeptide is Putative S-adenosyl-L-methionine-dependent methyltransferase MUL_4761 (Mycobacterium ulcerans (strain Agy99)).